Here is a 332-residue protein sequence, read N- to C-terminus: Nicotianamine synthase 1 (332 aa).

Belongs to the nicotianamine synthase (NAS)-like family. Expressed in roots.

It catalyses the reaction 3 S-adenosyl-L-methionine = nicotianamine + 3 S-methyl-5'-thioadenosine + 3 H(+). Synthesizes nicotianamine, a polyamine that is the first intermediate in the synthesis of the phytosiderophores of the mugineic acid type found in gramineae which serve as a sensor for the physiological iron status within the plant, and/or might be involved in the transport of iron. In Oryza sativa subsp. indica (Rice), this protein is Nicotianamine synthase 1 (NAS1).